We begin with the raw amino-acid sequence, 493 residues long: Amino acid permease 2 (493 aa).

The Cytoplasmic portion of the chain corresponds to 1-49; that stretch reads MGETAAANNHRHHHHHGHQVFDVASHDFVPPQPAFKCFDDDGRLKRTGT. The next 2 membrane-spanning stretches (helical) occupy residues 50 to 70 and 71 to 91; these read VWTASAHIITAVIGSGVLSLA and WAIAQLGWIAGPAVMLLFSLV. The Cytoplasmic portion of the chain corresponds to 92–138; that stretch reads TLYSSTLLSDCYRTGDAVSGKRNYTYMDAVRSILGGFKFKICGLIQY. Residues 139–159 traverse the membrane as a helical segment; it reads LNLFGIAIGYTIAASISMMAI. The Extracellular segment spans residues 160-175; it reads KRSNCFHKSGGKDPCH. Residues 176-196 traverse the membrane as a helical segment; sequence MSSNPYMIVFGVAEILLSQVP. The Cytoplasmic segment spans residues 197–200; that stretch reads DFDQ. Residues 201-221 traverse the membrane as a helical segment; sequence IWWISIVAAVMSFTYSAIGLA. The Extracellular segment spans residues 222–253; the sequence is LGIVQVAANGVFKGSLTGISIGTVTQTQKIWR. Residues 254-274 traverse the membrane as a helical segment; that stretch reads TFQALGDIAFAYSYSVVLIEI. The Cytoplasmic segment spans residues 275–293; the sequence is QDTVRSPPAESKTMKKATK. Residues 294 to 314 traverse the membrane as a helical segment; it reads ISIAVTTIFYMLCGSMGYAAF. Over 315–340 the chain is Extracellular; sequence GDAAPGNLLTGFGFYNPFWLLDIANA. Residues 341–361 form a helical membrane-spanning segment; that stretch reads AIVVHLVGAYQVFAQPIFAFI. The Cytoplasmic segment spans residues 362–396; it reads EKSVAERYPDNDFLSKEFEIRIPGFKSPYKVNVFR. A helical membrane pass occupies residues 397 to 417; that stretch reads MVYRSGFVVTTTVISMLMPFF. Over 418–419 the chain is Extracellular; that stretch reads ND. Residues 420-440 traverse the membrane as a helical segment; that stretch reads VVGILGALGFWPLTVYFPVEM. At 441–458 the chain is on the cytoplasmic side; sequence YIKQRKVEKWSTRWVCLQ. A helical transmembrane segment spans residues 459 to 479; it reads MLSVACLVISVVAGVGSIAGV. Topologically, residues 480–493 are extracellular; it reads MLDLKVYKPFKSTY.

The protein belongs to the amino acid/polyamine transporter 2 family. Amino acid/auxin permease (AAAP) (TC 2.A.18.2) subfamily. Highly expressed in developing pods. Found in the vascular strands of siliques, cotyledons, leaves and roots, in the inner phloem of stems, and in the funiculi. Lower levels of expression in flowers. Not expressed in seeds.

The protein resides in the cell membrane. Its activity is regulated as follows. Inhibited by diethylpyrocarbonate (DEPC). Functionally, amino acid-proton symporter. Stereospecific transporter with a broad specificity for histidine, arginine, glutamate and neutral amino acids, favoring small amino acids such as alanine, asparagine and glutamine. Also accepts large aromatic residues such as phenlalanine or tyrosine. Has a much higher affinity for basic amino acids as compared with AAP1. May function in xylem-to-phloem transfer and in uptake of amino acids assimilated in the green silique tissue. In Arabidopsis thaliana (Mouse-ear cress), this protein is Amino acid permease 2 (AAP2).